The primary structure comprises 520 residues: BTB/POZ domain-containing protein At3g50780 (520 aa).

The disordered stretch occupies residues 43 to 68 (SHNSLTKHKQSSPALQPPKPEKKPSS). The BTB domain occupies 127-196 (AKVILVGKQG…MYCKDMKQRL (70 aa)).

It participates in protein modification; protein ubiquitination. In terms of biological role, may act as a substrate-specific adapter of an E3 ubiquitin-protein ligase complex (CUL3-RBX1-BTB) which mediates the ubiquitination and subsequent proteasomal degradation of target proteins. The polypeptide is BTB/POZ domain-containing protein At3g50780 (Arabidopsis thaliana (Mouse-ear cress)).